Consider the following 422-residue polypeptide: Glutamate-1-semialdehyde 2,1-aminomutase (422 aa).

Lys264 bears the N6-(pyridoxal phosphate)lysine mark.

It belongs to the class-III pyridoxal-phosphate-dependent aminotransferase family. HemL subfamily. As to quaternary structure, homodimer. Requires pyridoxal 5'-phosphate as cofactor.

The protein resides in the cytoplasm. It catalyses the reaction (S)-4-amino-5-oxopentanoate = 5-aminolevulinate. It functions in the pathway porphyrin-containing compound metabolism; protoporphyrin-IX biosynthesis; 5-aminolevulinate from L-glutamyl-tRNA(Glu): step 2/2. The polypeptide is Glutamate-1-semialdehyde 2,1-aminomutase (Clostridium tetani (strain Massachusetts / E88)).